A 201-amino-acid chain; its full sequence is MSEHYYSEKPSVKSNKQTWSFRLRNKDFTFTSDSGVFSKKEVDFGSRLLIDSFEEPEVEGGILDVGCGYGPIGLSLASDFKDRTIHMIDVNERAVELSNENAEQNGITNVKIYQSDLFSNVDSAQTFASILTNPPIRAGKKVVHAIFEKSAEHLKASGELWIVIQKKQGAPSAIEKLEELFDEVSVVQKKKGYYIIKAKKV.

It belongs to the methyltransferase superfamily.

This is an uncharacterized protein from Bacillus subtilis (strain 168).